The chain runs to 102 residues: Nucleoid-associated protein BCc_301 (102 aa).

It belongs to the YbaB/EbfC family. Homodimer.

The protein localises to the cytoplasm. The protein resides in the nucleoid. Binds to DNA and alters its conformation. May be involved in regulation of gene expression, nucleoid organization and DNA protection. This Buchnera aphidicola subsp. Cinara cedri (strain Cc) protein is Nucleoid-associated protein BCc_301.